Reading from the N-terminus, the 173-residue chain is Shikimate kinase 2 (173 aa).

12–17 is a binding site for ATP; sequence GCGKTT. Residues threonine 16 and aspartate 32 each coordinate Mg(2+). Positions 34, 58, and 79 each coordinate substrate. The LID domain stretch occupies residues 112-126; the sequence is EENPQDNQRPTLTGR. Arginine 120 lines the ATP pocket. Arginine 139 is a binding site for substrate. Glutamine 155 serves as a coordination point for ATP.

It belongs to the shikimate kinase family. AroL subfamily. In terms of assembly, monomer. Mg(2+) serves as cofactor.

The protein localises to the cytoplasm. It catalyses the reaction shikimate + ATP = 3-phosphoshikimate + ADP + H(+). The protein operates within metabolic intermediate biosynthesis; chorismate biosynthesis; chorismate from D-erythrose 4-phosphate and phosphoenolpyruvate: step 5/7. In terms of biological role, catalyzes the specific phosphorylation of the 3-hydroxyl group of shikimic acid using ATP as a cosubstrate. The chain is Shikimate kinase 2 from Pectobacterium carotovorum subsp. carotovorum (strain PC1).